The chain runs to 594 residues: (-)-endo-fenchol synthase, chloroplastic (594 aa).

A chloroplast-targeting transit peptide spans 1-50 (MSSLVMHVGIVNKPAITYLPTLSRRASNLHNVSSTRLQTSCSLQLDYKPV). Residues Asp-348, Asp-352, Asp-492, and Glu-500 each coordinate Mg(2+). A DDXXD motif motif is present at residues 348 to 352 (DDIYD).

It belongs to the terpene synthase family. Tpsa subfamily. It depends on Mg(2+) as a cofactor. Mn(2+) is required as a cofactor. In terms of tissue distribution, expressed at low levels in leaves.

The protein localises to the plastid. The protein resides in the chloroplast. The enzyme catalyses (2E)-geranyl diphosphate = alpha-pinene + diphosphate. It catalyses the reaction (2E)-geranyl diphosphate + H2O = (1S,2S,4R)-endo-fenchol + diphosphate. The catalysed reaction is (2E)-geranyl diphosphate = limonene + diphosphate. It functions in the pathway secondary metabolite biosynthesis; terpenoid biosynthesis. Functionally, monoterpene synthase involved in the biosynthesis of volatile compounds widely used in aromatherapy and folk medicine, and present in culinary herbs. Mediates the conversion of (2E)-geranyl diphosphate (GPP) into alpha fenchol, limonene and alpha-pinene and, as minor compounds, into beta-myrcene, alpha-terpinolene and alpha-phellandrene. The sequence is that of (-)-endo-fenchol synthase, chloroplastic from Lavandula stoechas (Butterfly lavender).